Consider the following 168-residue polypeptide: DAZ-associated protein 2 (168 aa).

The span at 1–13 shows a compositional bias: low complexity; that stretch reads MNSKGQYPTQPTY. The disordered stretch occupies residues 1-25; it reads MNSKGQYPTQPTYPVQPPGNPVYPQ. Residues 39-42 carry the PPAY motif; the sequence is PPAY. Serine 77 carries the phosphoserine modification.

Interacts with SOX6. Interacts with DAZ1 and DAZL. Interacts with IL17RB. May interact with FAM168B. Interacts with INCA1. Interacts with EIF4G1 and EIF4G2. Interacts (via PPAY motif) with NEDD4 (via WW domains). Interacts with transcription factor TCF4; the interaction results in localization of DAZAP2 to the nucleus. Interacts with transcription factors TCF7 and TCF7L1. Interacts with transcription factor LEF1. Interacts with serine/threonine-protein kinase HIPK2; the interaction results in phosphorylation of DAZAP2 which causes localization of DAZAP2 to the nucleus, reduces interaction of DAZAP2 with HIPK2 and prevents DAZAP2-dependent degradation of HIPK2. Interacts with ubiquitin ligase SIAH1; the interaction is decreased following phosphorylation of DAZAP2 by HIPK2. Interacts with TP53; the interaction is triggered by DNA damage. Ubiquitinated by SMURF2, leading to proteasomal degradation. Ubiquitinated by NEDD4, leading to proteasomal degradation. Post-translationally, following DNA damage, phosphorylated by HIPK2 which promotes DAZAP2 localization to the nucleus, reduces interaction of DAZAP2 with HIPK2 and SIAH1, and prevents DAZAP2-dependent ubiquitination of HIPK2 by E3 ubiquitin-protein ligase SIAH1 and subsequent HIPK2 proteasomal degradation.

Its subcellular location is the cytoplasm. The protein localises to the nucleus. It localises to the nucleus speckle. The protein resides in the nuclear body. It is found in the stress granule. Functionally, in unstressed cells, promotes SIAH1-mediated polyubiquitination and degradation of the serine/threonine-protein kinase HIPK2, probably by acting as a loading factor that potentiates complex formation between HIPK2 and ubiquitin ligase SIAH1. In response to DNA damage, localizes to the nucleus following phosphorylation by HIPK2 and modulates the expression of a subset of TP53/p53 target genes by binding to TP53 at target gene promoters. This limits the expression of a number of cell death-mediating TP53 target genes, reducing DNA damage-induced cell death. Enhances the binding of transcription factor TCF7L2/TCF4, a Wnt signaling pathway effector, to the promoters of target genes. Plays a role in stress granule formation. In Macaca fascicularis (Crab-eating macaque), this protein is DAZ-associated protein 2.